Consider the following 459-residue polypeptide: Ribulose bisphosphate carboxylase large chain (459 aa).

Substrate-binding residues include Asn-98 and Thr-148. Residue Lys-150 is the Proton acceptor of the active site. Position 152 (Lys-152) interacts with substrate. Mg(2+) contacts are provided by Lys-176, Asp-178, and Glu-179. Lys-176 is subject to N6-carboxylysine. The Proton acceptor role is filled by His-268. The substrate site is built by Arg-269, His-301, and Ser-353.

The protein belongs to the RuBisCO large chain family. Type I subfamily. Heterohexadecamer of 8 large chains and 8 small chains. It depends on Mg(2+) as a cofactor.

Its subcellular location is the plastid. The protein localises to the chloroplast. The catalysed reaction is 2 (2R)-3-phosphoglycerate + 2 H(+) = D-ribulose 1,5-bisphosphate + CO2 + H2O. The enzyme catalyses D-ribulose 1,5-bisphosphate + O2 = 2-phosphoglycolate + (2R)-3-phosphoglycerate + 2 H(+). Its function is as follows. RuBisCO catalyzes two reactions: the carboxylation of D-ribulose 1,5-bisphosphate, the primary event in carbon dioxide fixation, as well as the oxidative fragmentation of the pentose substrate in the photorespiration process. Both reactions occur simultaneously and in competition at the same active site. This chain is Ribulose bisphosphate carboxylase large chain (rbcL), found in Calyptrosphaera sphaeroidea.